Consider the following 711-residue polypeptide: DNA topoisomerase 3 (711 aa).

One can recognise a Toprim domain in the interval 2-135 (KSLILAEKPS…IKRLWISSVT (134 aa)). 2 residues coordinate Mg(2+): Glu8 and Asp104. In terms of domain architecture, Topo IA-type catalytic spans 152-580 (FQHLYEAALA…EMKAFTQSIV (429 aa)). The interval 186 to 191 (SLGRVQ) is interaction with DNA. Residue Tyr305 is the O-(5'-phospho-DNA)-tyrosine intermediate of the active site. Positions 672 to 699 (KRFKNKSSGKVSKKEMKKYMNNEDSLEN) are disordered. The span at 683–692 (SKKEMKKYMN) shows a compositional bias: basic and acidic residues.

The protein belongs to the type IA topoisomerase family. It depends on Mg(2+) as a cofactor.

The catalysed reaction is ATP-independent breakage of single-stranded DNA, followed by passage and rejoining.. Functionally, releases the supercoiling and torsional tension of DNA, which is introduced during the DNA replication and transcription, by transiently cleaving and rejoining one strand of the DNA duplex. Introduces a single-strand break via transesterification at a target site in duplex DNA. The scissile phosphodiester is attacked by the catalytic tyrosine of the enzyme, resulting in the formation of a DNA-(5'-phosphotyrosyl)-enzyme intermediate and the expulsion of a 3'-OH DNA strand. The free DNA strand then undergoes passage around the unbroken strand, thus removing DNA supercoils. Finally, in the religation step, the DNA 3'-OH attacks the covalent intermediate to expel the active-site tyrosine and restore the DNA phosphodiester backbone. The protein is DNA topoisomerase 3 of Staphylococcus haemolyticus (strain JCSC1435).